The sequence spans 130 residues: Large ribosomal subunit protein bL17 (130 aa).

Belongs to the bacterial ribosomal protein bL17 family. Part of the 50S ribosomal subunit. Contacts protein L32.

The sequence is that of Large ribosomal subunit protein bL17 from Nitrosomonas europaea (strain ATCC 19718 / CIP 103999 / KCTC 2705 / NBRC 14298).